The chain runs to 240 residues: B-cell receptor-associated protein 29 (240 aa).

The Lumenal segment spans residues 1–6 (MTLQWT). The chain crosses the membrane as a helical span at residues 7 to 27 (AVATFLYAEIGLILIFCLPFI). Residues 28 to 43 (PPQRWQKIFSFSVWGK) are Cytoplasmic-facing. The helical transmembrane segment at 44-64 (IASFWNKAFLTIIILLIVLFL) threads the bilayer. The Lumenal portion of the chain corresponds to 65 to 103 (DAVREVRKYSSTHTIEKSSASRPAAYEHTQMKLFRSQRN). A helical membrane pass occupies residues 104–124 (LYISGFSLFFWLVLRRLVTLI). Residues 125–240 (TQLAKELSHK…DRAGKDKKCL (116 aa)) lie on the Cytoplasmic side of the membrane. The stretch at 166–233 (GKEEEHILEA…REHSELQDRA (68 aa)) forms a coiled coil. Residues 237-240 (KKCL) carry the Di-lysine motif motif.

It belongs to the BCAP29/BCAP31 family. In terms of assembly, homodimer and heterodimer with BCAP31. Binds CASP8 as a complex containing BCAP31, BCAP29, BCL2 and/or BCL2L1. Interacts with VAMP3, VAMP1 and membrane IgD immunoglobulins. May interact with ACTG1 and non-muscle myosin II.

The protein localises to the endoplasmic reticulum membrane. Functionally, may play a role in anterograde transport of membrane proteins from the endoplasmic reticulum to the Golgi. May be involved in CASP8-mediated apoptosis. This Bos taurus (Bovine) protein is B-cell receptor-associated protein 29 (BCAP29).